An 828-amino-acid chain; its full sequence is Auxin response factor 2B (828 aa).

Residues 128–230 (FCKTLTASDT…ELRVGVRRAM (103 aa)) constitute a DNA-binding region (TF-B3). Disordered stretches follow at residues 348-397 (PDRV…GSSK), 681-703 (EQFQTSHPGTRDREGKGLVHSTR), and 791-828 (NPGTLNSKGEDNSSVAEGSDAKEVKNLQLHIDSSPEDS). The span at 360–370 (LSPPALNPLPI) shows a compositional bias: pro residues. Residues 380–390 (VLPSSPDSSVL) show a composition bias toward polar residues. In terms of domain architecture, PB1 spans 703 to 786 (RSCTKVHKQG…RKIFIYTKDE (84 aa)). The span at 791–806 (NPGTLNSKGEDNSSVA) shows a compositional bias: polar residues.

Belongs to the ARF family. As to quaternary structure, homodimers and heterodimers. As to expression, expressed in root, leaf and stem. Also expressed in flower and fruit. Expressed in flower buds about three days before opening including stamen, petal and sepal with the highest in ovary.

It is found in the nucleus. Functionally, auxin response factors (ARFs) are transcriptional factors that binds specifically to the DNA sequence 5'-TGTCTC-3' found in the auxin-responsive promoter elements (AuxREs). Could act as transcriptional activator or repressor. Involved in the control of fruit ripening process. Regulates expression of a number of ripening regulators, transcription factors, and ethylene biosynthesis and signaling components. May act as a transcriptional repressor of auxin-responsive genes. The protein is Auxin response factor 2B of Solanum lycopersicum (Tomato).